A 189-amino-acid polypeptide reads, in one-letter code: HGPRTase-like protein (189 aa).

Belongs to the purine/pyrimidine phosphoribosyltransferase family. Archaeal HPRT subfamily.

May catalyze a purine salvage reaction, the substrate is unknown. This Halorhabdus utahensis (strain DSM 12940 / JCM 11049 / AX-2) protein is HGPRTase-like protein.